Here is a 477-residue protein sequence, read N- to C-terminus: Glycogen synthase (477 aa).

K15 contributes to the ADP-alpha-D-glucose binding site.

It belongs to the glycosyltransferase 1 family. Bacterial/plant glycogen synthase subfamily.

The catalysed reaction is [(1-&gt;4)-alpha-D-glucosyl](n) + ADP-alpha-D-glucose = [(1-&gt;4)-alpha-D-glucosyl](n+1) + ADP + H(+). It functions in the pathway glycan biosynthesis; glycogen biosynthesis. Synthesizes alpha-1,4-glucan chains using ADP-glucose. The polypeptide is Glycogen synthase (Serratia proteamaculans (strain 568)).